Consider the following 317-residue polypeptide: Cold tolerance protein 1 (317 aa).

It belongs to the CTO1 family.

Functionally, protein required for cold tolerance. Plays a role in the regulation of phosphate uptake. The sequence is that of Cold tolerance protein 1 from Saccharomyces cerevisiae (strain ATCC 204508 / S288c) (Baker's yeast).